Reading from the N-terminus, the 208-residue chain is Thymidylate kinase (208 aa).

10-17 (GPEGSGKT) provides a ligand contact to ATP.

Belongs to the thymidylate kinase family.

The enzyme catalyses dTMP + ATP = dTDP + ADP. Functionally, phosphorylation of dTMP to form dTDP in both de novo and salvage pathways of dTTP synthesis. This Bacillus mycoides (strain KBAB4) (Bacillus weihenstephanensis) protein is Thymidylate kinase.